The sequence spans 142 residues: Succinate dehydrogenase subunit 6, mitochondrial (142 aa).

In terms of assembly, component of complex II composed of eight subunits in plants: four classical SDH subunits SDH1, SDH2, SDH3 and SDH4 (a flavoprotein (FP), an iron-sulfur protein (IP), and a cytochrome b composed of a large and a small subunit.), as well as four subunits unknown in mitochondria from bacteria and heterotrophic eukaryotes.

It is found in the mitochondrion inner membrane. It participates in carbohydrate metabolism; tricarboxylic acid cycle. This chain is Succinate dehydrogenase subunit 6, mitochondrial, found in Oryza sativa subsp. japonica (Rice).